We begin with the raw amino-acid sequence, 159 residues long: Thioredoxin O2, mitochondrial (159 aa).

Ser40 is modified (phosphoserine). Positions 43 to 159 constitute a Thioredoxin domain; sequence FAEGDRSSFV…LKSVMEQLYK (117 aa). Catalysis depends on nucleophile residues Cys83 and Cys86. Cysteines 83 and 86 form a disulfide.

Belongs to the thioredoxin family. Plant O-type subfamily.

It localises to the mitochondrion. Its function is as follows. Thiol-disulfide oxidoreductase that may participate in various redox reactions. Possesses insulin disulfide bonds reducing activity. Reduced by thioredoxin reductases NTRA and NTRB. This is Thioredoxin O2, mitochondrial from Arabidopsis thaliana (Mouse-ear cress).